Reading from the N-terminus, the 176-residue chain is ATP-dependent protease subunit HslV (176 aa).

The active site involves T2. The Na(+) site is built by G158, C161, and T164.

The protein belongs to the peptidase T1B family. HslV subfamily. A double ring-shaped homohexamer of HslV is capped on each side by a ring-shaped HslU homohexamer. The assembly of the HslU/HslV complex is dependent on binding of ATP.

The protein localises to the cytoplasm. It catalyses the reaction ATP-dependent cleavage of peptide bonds with broad specificity.. With respect to regulation, allosterically activated by HslU binding. Protease subunit of a proteasome-like degradation complex believed to be a general protein degrading machinery. This is ATP-dependent protease subunit HslV from Pasteurella multocida (strain Pm70).